Consider the following 852-residue polypeptide: Disks large homolog 2 (852 aa).

2 S-palmitoyl cysteine lipidation sites follow: Cys5 and Cys7. Ser28 is modified (phosphoserine). A Phosphotyrosine modification is found at Tyr58. A Phosphoserine modification is found at Ser65. PDZ domains lie at 98-185 (EITL…RRRR) and 193-280 (EIKL…GKPT). Phosphoserine is present on residues Ser307, Ser328, Ser360, Ser365, Ser406, and Ser414. Residues 421 to 502 (KVVLHKGSTG…TVTIIAQYQP (82 aa)) form the PDZ 3 domain. Residue Tyr505 is modified to Phosphotyrosine. A phosphoserine mark is found at Ser528, Ser530, and Ser553. The SH3 domain maps to 536–606 (KRSLYVRAMF…PSKRRVERKE (71 aa)). Positions 662 to 837 (TRPVIILGPM…IYNQCKLVIE (176 aa)) constitute a Guanylate kinase-like domain. 2 positions are modified to phosphotyrosine: Tyr732 and Tyr737.

As to quaternary structure, interacts with NOS1/nNOS through second PDZ domain. Interacts with KCNJ2/Kir2.1 (via C-terminus) through one of its PDZ domains. Interacts with KCNJ4. Interacts with FRMPD4 (via C-terminus). Interacts through its PDZ domains with NETO1. Interacts with LRFN1, LRFN2 and LRFN4. Interacts with FASLG. Interacts with KCNJ4. Interacts with ADAM22. Interacts with DGKI (via PDZ-binding motif). Post-translationally, palmitoylation of isoform 1 and isoform 2 is not required for targeting to postsynaptic density. Brain. Highest levels of isoform 1 in cortex, olfactory bulb, thalamus, hypothalamus, striatum and hippocampus. Highest level of isoform 2 in olfactory bulb. Reduced levels in cortex and hippocampus. Highest level of isoform 4 in spinal cord. Low levels of isoform 4, isoform 6, and isoform 7 in superior cervical ganglion.

It is found in the cell membrane. The protein localises to the postsynaptic density. Its subcellular location is the synapse. The protein resides in the membrane. It localises to the cell projection. It is found in the axon. The protein localises to the perikaryon. In terms of biological role, required for perception of chronic pain through NMDA receptor signaling. Regulates surface expression of NMDA receptors in dorsal horn neurons of the spinal cord. Interacts with the cytoplasmic tail of NMDA receptor subunits as well as inward rectifying potassium channels. Involved in regulation of synaptic stability at cholinergic synapses. Part of the postsynaptic protein scaffold of excitatory synapses. In Mus musculus (Mouse), this protein is Disks large homolog 2 (Dlg2).